The chain runs to 37 residues: Large ribosomal subunit protein bL36c (37 aa).

The protein belongs to the bacterial ribosomal protein bL36 family.

The protein localises to the plastid. It localises to the chloroplast. The protein is Large ribosomal subunit protein bL36c (rpl36) of Chlorella vulgaris (Green alga).